The following is a 1203-amino-acid chain: MAGHDVQYGKHRTRRSFSRIKEVLDLPNLIEIQTDSFKAFLDHGLKEVFEDVLPISNFTDTMELEFVGYEIKEPKYTLEEARIHDASYSAPIFVTFRLINKETGEIKTQEVFFGDFPIMTEMGTFIINGGERIIVSQLVRSPGVYFNDKVDKNGKVGYGSTVIPNRGAWLELESDSKDITYTRIDRTRKIPFTTLVRALGFSGDDEIFDIFGDSELVRNTVEKDIHKNPMDSRTDEALKEIYERLRPGEPKTAESSRSLLVARFFDPRRYDLAAVGRYKINKKLNVKTRLLNQTIAEPLVDPETGEILVEAGTIMTRSVIESIESHLDGDLNKIVYIPNDAAVVTEPVVLQKFKVVAPTDPDRVVTIIGNANPDDKVRTVTPADILAEMSYFLNLAEGLGRVDDIDHLGNRRIRAVGELLANQVRLGLSRMERNVRERMSVQDNEVLTPQQIINIRPVTAAVKEFFGSSQLSQFMDQHNPLSELSHKRRLSALGPGGLTRDRAGYEVRDVHYTHYGRMCPIETPEGPNIGLINNLSSYGHLNKYGFVQTPYRKVDRETGVVTNEIVWLTADEEDEYTVAQANSRLNEDGTFAEKIVMGRHQGVNQEYPANIVDYMDVSPKQVVAVATACIPFLENDDSNRALMGANMQRQAVPLINPQAPYVGTGMEYQAAHDSGAAVIAQYDGKVTYADADKVEVRREDGSLDVYHIQKFRRSNSGTAYNQRTLVKVGDVVEKGDFIADGPSMENGEMALGQNPIVAYMTWEGYNFEDAVIMSERLVKDDVYTSVHLEEYESETRDTKLGPEEITREIPNVGEDALKDLDEMGIIRIGAEVKEGDILVGKVTPKGEKDLSAEERLLHAIFGDKSREVRDTSLRVPHGADGVVRDVKIFTRVNGDELQSGVNMLVRVYIAQKRKIKVGDKMAGRHGNKGVVSRIVPVEDMPYLPDGTPVDIMLNPLGVPSRMNIGQVMELHLGMAARTLGIHIATPVFDGASSEDLWSTVKEAGMDSDAKTILYDGRTGEPFDNRVSVGVMYMIKLHHMVDDKLHARSVGPYSTVTQQPLGGKAQFGGQRFGEMEVWALEAYGASNVLQEILTYKSDDINGRLKAYEAITKGKPIPKPGVPESFRVLVKELQSLGLDMRVLDEDDQEVELRDLDEGMDEDVIHVDDLEKAREKAAQEAKAAFEAEEAEKATKAEATEEAAEQE.

A compositionally biased stretch (basic and acidic residues) spans 1174–1195 (AAQEAKAAFEAEEAEKATKAEA). The interval 1174–1203 (AAQEAKAAFEAEEAEKATKAEATEEAAEQE) is disordered.

The protein belongs to the RNA polymerase beta chain family. The RNAP catalytic core consists of 2 alpha, 1 beta, 1 beta' and 1 omega subunit. When a sigma factor is associated with the core the holoenzyme is formed, which can initiate transcription.

It carries out the reaction RNA(n) + a ribonucleoside 5'-triphosphate = RNA(n+1) + diphosphate. DNA-dependent RNA polymerase catalyzes the transcription of DNA into RNA using the four ribonucleoside triphosphates as substrates. In Streptococcus pneumoniae (strain P1031), this protein is DNA-directed RNA polymerase subunit beta.